Reading from the N-terminus, the 1039-residue chain is Error-prone DNA polymerase (1039 aa).

This sequence belongs to the DNA polymerase type-C family. DnaE2 subfamily.

The protein localises to the cytoplasm. It carries out the reaction DNA(n) + a 2'-deoxyribonucleoside 5'-triphosphate = DNA(n+1) + diphosphate. Its function is as follows. DNA polymerase involved in damage-induced mutagenesis and translesion synthesis (TLS). It is not the major replicative DNA polymerase. In Idiomarina loihiensis (strain ATCC BAA-735 / DSM 15497 / L2-TR), this protein is Error-prone DNA polymerase.